The primary structure comprises 560 residues: Probable methionine--tRNA ligase, cytoplasmic (560 aa).

The short motif at 16–26 (PYVNNQPHLGN) is the 'HIGH' region element. The 'KMSKS' region motif lies at 347–351 (KFSKS). Position 350 (Lys-350) interacts with ATP.

It belongs to the class-I aminoacyl-tRNA synthetase family.

It is found in the cytoplasm. The enzyme catalyses tRNA(Met) + L-methionine + ATP = L-methionyl-tRNA(Met) + AMP + diphosphate. The protein is Probable methionine--tRNA ligase, cytoplasmic of Vairimorpha ceranae (strain BRL01) (Microsporidian parasite).